The sequence spans 267 residues: MPENRIARLLKKNKKLLIAYYMPEFPVPGATLPVLEALQKNGADLIELGIAYSDPIGDGPVIQDAAHTAIRNGMSVKKLLDLVRQARKGEGCRKITAPILLMGYCNPLIAYGGDCFLQDAASAGVDGLLLPDLPPEEADDFLERAKGFGLTVVFLVSPVTPPERIEYIDSLSTDFSYCLAVNATTGTAKLSDAGSEAAIDEYLRRVRRHTRKKFVVGFGIKDKARVGHMWELADGAVVGTALLQHIAGAGTPEETARLAGEFWQTLQ.

Residues glutamate 47 and aspartate 58 each act as proton acceptor in the active site.

This sequence belongs to the TrpA family. As to quaternary structure, tetramer of two alpha and two beta chains.

It carries out the reaction (1S,2R)-1-C-(indol-3-yl)glycerol 3-phosphate + L-serine = D-glyceraldehyde 3-phosphate + L-tryptophan + H2O. Its pathway is amino-acid biosynthesis; L-tryptophan biosynthesis; L-tryptophan from chorismate: step 5/5. Its function is as follows. The alpha subunit is responsible for the aldol cleavage of indoleglycerol phosphate to indole and glyceraldehyde 3-phosphate. The sequence is that of Tryptophan synthase alpha chain from Chlorobium phaeobacteroides (strain DSM 266 / SMG 266 / 2430).